The chain runs to 691 residues: Elongation factor G (691 aa).

The region spanning 8 to 282 is the tr-type G domain; that stretch reads ERVRNIGIAA…AVVDYLPAPI (275 aa). GTP-binding positions include 17-24, 81-85, and 135-138; these read AHIDAGKT, DTPGH, and NKMD.

The protein belongs to the TRAFAC class translation factor GTPase superfamily. Classic translation factor GTPase family. EF-G/EF-2 subfamily.

The protein resides in the cytoplasm. Its function is as follows. Catalyzes the GTP-dependent ribosomal translocation step during translation elongation. During this step, the ribosome changes from the pre-translocational (PRE) to the post-translocational (POST) state as the newly formed A-site-bound peptidyl-tRNA and P-site-bound deacylated tRNA move to the P and E sites, respectively. Catalyzes the coordinated movement of the two tRNA molecules, the mRNA and conformational changes in the ribosome. The sequence is that of Elongation factor G from Thermosynechococcus vestitus (strain NIES-2133 / IAM M-273 / BP-1).